The sequence spans 295 residues: Ribosomal RNA small subunit methyltransferase H (295 aa).

S-adenosyl-L-methionine-binding positions include 36-38 (GGH), Asp56, Leu90, Asp104, and His111.

The protein belongs to the methyltransferase superfamily. RsmH family.

Its subcellular location is the cytoplasm. The enzyme catalyses cytidine(1402) in 16S rRNA + S-adenosyl-L-methionine = N(4)-methylcytidine(1402) in 16S rRNA + S-adenosyl-L-homocysteine + H(+). In terms of biological role, specifically methylates the N4 position of cytidine in position 1402 (C1402) of 16S rRNA. The chain is Ribosomal RNA small subunit methyltransferase H from Dictyoglomus turgidum (strain DSM 6724 / Z-1310).